Reading from the N-terminus, the 697-residue chain is Serotransferrin (697 aa).

The N-terminal stretch at Met1–Ala19 is a signal peptide. Transferrin-like domains are found at residues Val25–Glu347 and Val360–Lys682. Cystine bridges form between Cys28–Cys67 and Cys38–Cys58. Arg42 carries the post-translational modification Dimethylated arginine. Residues Asp82 and Tyr114 each contribute to the Fe(3+) site. 8 disulfide bridges follow: Cys137–Cys213, Cys156–Cys350, Cys177–Cys193, Cys180–Cys196, Cys190–Cys198, Cys246–Cys260, Cys363–Cys395, and Cys373–Cys386. Hydrogencarbonate is bound by residues Thr139, Arg143, Ala145, and Gly146. Residue Tyr207 coordinates Fe(3+). His268 is a Fe(3+) binding site. Residue Ser388 is modified to Phosphoserine. Fe(3+) contacts are provided by Asp410 and Tyr448. Intrachain disulfides connect Cys420–Cys692, Cys435–Cys655, Cys472–Cys543, Cys496–Cys683, Cys506–Cys520, Cys517–Cys526, Cys583–Cys597, and Cys633–Cys638. Thr474, Arg478, Ala480, and Gly481 together coordinate hydrogencarbonate. The N-linked (GlcNAc...) asparagine glycan is linked to Asn513. Tyr537 provides a ligand contact to Fe(3+). Position 605 (His605) interacts with Fe(3+). Ser684 is modified (phosphoserine).

Belongs to the transferrin family. Monomer. Part of a complex composed of SLC40A1/ferroportin, TF/transferrin and HEPH/hephaestin that transfers iron from cells to transferrin. In terms of tissue distribution, expressed by the liver and secreted in plasma.

Its subcellular location is the secreted. In terms of biological role, transferrins are iron binding transport proteins which can bind two Fe(3+) ions in association with the binding of an anion, usually bicarbonate. It is responsible for the transport of iron from sites of absorption and heme degradation to those of storage and utilization. Serum transferrin may also have a further role in stimulating cell proliferation. The sequence is that of Serotransferrin (Tf) from Mus musculus (Mouse).